A 212-amino-acid polypeptide reads, in one-letter code: Ribonuclease HII (212 aa).

Residues 4–206 enclose the RNase H type-2 domain; sequence EVQCGIDEAG…YKKIKEDVES (203 aa). Aspartate 10, glutamate 11, and aspartate 103 together coordinate a divalent metal cation.

Belongs to the RNase HII family. Mn(2+) serves as cofactor. It depends on Mg(2+) as a cofactor.

It is found in the cytoplasm. The enzyme catalyses Endonucleolytic cleavage to 5'-phosphomonoester.. Its function is as follows. Endonuclease that specifically degrades the RNA of RNA-DNA hybrids. The protein is Ribonuclease HII of Thermoplasma volcanium (strain ATCC 51530 / DSM 4299 / JCM 9571 / NBRC 15438 / GSS1).